The sequence spans 237 residues: Large ribosomal subunit protein uL1 (237 aa).

The protein belongs to the universal ribosomal protein uL1 family. Part of the 50S ribosomal subunit.

Functionally, binds directly to 23S rRNA. The L1 stalk is quite mobile in the ribosome, and is involved in E site tRNA release. Its function is as follows. Protein L1 is also a translational repressor protein, it controls the translation of the L11 operon by binding to its mRNA. The polypeptide is Large ribosomal subunit protein uL1 (Chloroflexus aggregans (strain MD-66 / DSM 9485)).